A 232-amino-acid chain; its full sequence is Lipid A 1-phosphatase (232 aa).

Helical transmembrane passes span 10–30 (LFIT…PVGA), 42–62 (ELLT…LLFF), 80–100 (ALYV…SGLL), 136–156 (FPSG…LLFP), 160–180 (VAFI…GAHY), and 183–203 (DVIA…IVYA).

The protein belongs to the lipid A LpxE 1-phosphatase family.

It localises to the cell inner membrane. Its pathway is bacterial outer membrane biogenesis; LPS lipid A biosynthesis. Probably removes the 1-phosphate moiety from lipid A species. Does not seem to act on other membrane components, nor does it dephosphorylate the 4'-phosphate group of lipid A and/or lipid A precursors. The protein is Lipid A 1-phosphatase of Rhizobium etli (strain ATCC 51251 / DSM 11541 / JCM 21823 / NBRC 15573 / CFN 42).